The sequence spans 367 residues: MKKKIRVLVVDDSAFMRRCLKDILENEEDMEVIDTARDGNEAVKKAVELRPDVITLDINMPVMDGLTALQYIMSLAPCPVVIISSLSTEGALTTFEALELGAVDFVAKPGGTVSLGIKQLADEIVSKVRIAALSNKELLSSSRNFKKLLKRRNQEVTRKVYENKISKKEIVVVIGVSTGGPKTLMEILPYLPSDFPAAVLVVQHMPPGFTQSFAQRLDQSCNLKVKEAEDKAFIEPGTVIIAKGGWHLVVERDSRSSKLITRLTQKPEETLYKPSINVTMKSVLENVDGRNIIGILLTGMGDDGADMMVEIRKRGGLTIAESQETAIVYGMPRAAVERGGAEIVAPAYKISDILLKKVNEYARTSEY.

The Response regulatory domain occupies 6-123 (RVLVVDDSAF…SLGIKQLADE (118 aa)). At D57 the chain carries 4-aspartylphosphate. The 197-residue stretch at 165-361 (ISKKEIVVVI…DILLKKVNEY (197 aa)) folds into the CheB-type methylesterase domain. Catalysis depends on residues S177, H204, and D303.

This sequence belongs to the CheB family. In terms of processing, phosphorylated by CheA. Phosphorylation of the N-terminal regulatory domain activates the methylesterase activity.

It is found in the cytoplasm. It catalyses the reaction [protein]-L-glutamate 5-O-methyl ester + H2O = L-glutamyl-[protein] + methanol + H(+). The catalysed reaction is L-glutaminyl-[protein] + H2O = L-glutamyl-[protein] + NH4(+). Its function is as follows. Involved in chemotaxis. Part of a chemotaxis signal transduction system that modulates chemotaxis in response to various stimuli. Catalyzes the demethylation of specific methylglutamate residues introduced into the chemoreceptors (methyl-accepting chemotaxis proteins or MCP) by CheR. Also mediates the irreversible deamidation of specific glutamine residues to glutamic acid. The polypeptide is Protein-glutamate methylesterase/protein-glutamine glutaminase (Caldanaerobacter subterraneus subsp. tengcongensis (strain DSM 15242 / JCM 11007 / NBRC 100824 / MB4) (Thermoanaerobacter tengcongensis)).